We begin with the raw amino-acid sequence, 368 residues long: Type 2 DNA topoisomerase 6 subunit A (368 aa).

The 140-residue stretch at 9 to 148 folds into the Topo IIA-type catalytic domain; it reads TEDEIARERL…FHMRPEESGA (140 aa). Catalysis depends on tyrosine 103, which acts as the O-(5'-phospho-DNA)-tyrosine intermediate. Mg(2+)-binding residues include glutamate 201 and aspartate 253.

Belongs to the TOP6A family. In terms of assembly, homodimer. Heterotetramer of two Top6A and two Top6B chains. Mg(2+) serves as cofactor.

It carries out the reaction ATP-dependent breakage, passage and rejoining of double-stranded DNA.. Relaxes both positive and negative superturns and exhibits a strong decatenase activity. This Natronomonas pharaonis (strain ATCC 35678 / DSM 2160 / CIP 103997 / JCM 8858 / NBRC 14720 / NCIMB 2260 / Gabara) (Halobacterium pharaonis) protein is Type 2 DNA topoisomerase 6 subunit A.